A 264-amino-acid chain; its full sequence is Thymidylate synthase (264 aa).

A dUMP-binding site is contributed by arginine 21. Histidine 51 provides a ligand contact to (6R)-5,10-methylene-5,6,7,8-tetrahydrofolate. 126-127 (RR) provides a ligand contact to dUMP. Cysteine 146 acts as the Nucleophile in catalysis. DUMP contacts are provided by residues 166 to 169 (RSCD), asparagine 177, and 207 to 209 (HLY). Aspartate 169 is a (6R)-5,10-methylene-5,6,7,8-tetrahydrofolate binding site. Alanine 263 contacts (6R)-5,10-methylene-5,6,7,8-tetrahydrofolate.

This sequence belongs to the thymidylate synthase family. Bacterial-type ThyA subfamily. In terms of assembly, homodimer.

The protein localises to the cytoplasm. It carries out the reaction dUMP + (6R)-5,10-methylene-5,6,7,8-tetrahydrofolate = 7,8-dihydrofolate + dTMP. The protein operates within pyrimidine metabolism; dTTP biosynthesis. In terms of biological role, catalyzes the reductive methylation of 2'-deoxyuridine-5'-monophosphate (dUMP) to 2'-deoxythymidine-5'-monophosphate (dTMP) while utilizing 5,10-methylenetetrahydrofolate (mTHF) as the methyl donor and reductant in the reaction, yielding dihydrofolate (DHF) as a by-product. This enzymatic reaction provides an intracellular de novo source of dTMP, an essential precursor for DNA biosynthesis. This chain is Thymidylate synthase, found in Baumannia cicadellinicola subsp. Homalodisca coagulata.